The following is a 334-amino-acid chain: Ketol-acid reductoisomerase (NADP(+)) (334 aa).

The region spanning 1–181 is the KARI N-terminal Rossmann domain; that stretch reads MTTVYYDQSV…GATRAGVLET (181 aa). Residues 25 to 28, Arg-48, Ser-52, and 82 to 85 each bind NADP(+); these read YGSQ and DEIQ. His-107 is an active-site residue. Gly-133 contributes to the NADP(+) binding site. In terms of domain architecture, KARI C-terminal knotted spans 182 to 327; the sequence is SFKEETETDL…RELRDMMPFI (146 aa). Positions 190, 194, 226, and 230 each coordinate Mg(2+). Substrate is bound at residue Ser-251.

It belongs to the ketol-acid reductoisomerase family. Mg(2+) serves as cofactor.

It catalyses the reaction (2R)-2,3-dihydroxy-3-methylbutanoate + NADP(+) = (2S)-2-acetolactate + NADPH + H(+). The catalysed reaction is (2R,3R)-2,3-dihydroxy-3-methylpentanoate + NADP(+) = (S)-2-ethyl-2-hydroxy-3-oxobutanoate + NADPH + H(+). It functions in the pathway amino-acid biosynthesis; L-isoleucine biosynthesis; L-isoleucine from 2-oxobutanoate: step 2/4. The protein operates within amino-acid biosynthesis; L-valine biosynthesis; L-valine from pyruvate: step 2/4. Involved in the biosynthesis of branched-chain amino acids (BCAA). Catalyzes an alkyl-migration followed by a ketol-acid reduction of (S)-2-acetolactate (S2AL) to yield (R)-2,3-dihydroxy-isovalerate. In the isomerase reaction, S2AL is rearranged via a Mg-dependent methyl migration to produce 3-hydroxy-3-methyl-2-ketobutyrate (HMKB). In the reductase reaction, this 2-ketoacid undergoes a metal-dependent reduction by NADPH to yield (R)-2,3-dihydroxy-isovalerate. The sequence is that of Ketol-acid reductoisomerase (NADP(+)) from Staphylococcus saprophyticus subsp. saprophyticus (strain ATCC 15305 / DSM 20229 / NCIMB 8711 / NCTC 7292 / S-41).